A 384-amino-acid polypeptide reads, in one-letter code: uncharacterized protein (384 aa).

Positions 137-303 (EHDAPNRLWQ…VPGSRYQPSA (167 aa)) constitute an Integrase catalytic domain.

This is an uncharacterized protein from Escherichia coli (strain K12).